Here is a 406-residue protein sequence, read N- to C-terminus: Linalool 8-monooxygenase (406 aa).

Position 355 (Cys355) interacts with heme.

Belongs to the cytochrome P450 family. Requires heme as cofactor.

The catalysed reaction is linalool + 2 reduced [NADPH--hemoprotein reductase] + 2 O2 = (6E)-8-oxolinalool + 2 oxidized [NADPH--hemoprotein reductase] + 3 H2O + 2 H(+). It participates in terpene metabolism; linalool degradation. In terms of biological role, catalyzes the 8-methyl hydroxylation of linalool. The chain is Linalool 8-monooxygenase (linC) from Pseudomonas putida (Arthrobacter siderocapsulatus).